We begin with the raw amino-acid sequence, 509 residues long: DNA nucleotidylexotransferase (509 aa).

The disordered stretch occupies residues Met1–Ser25. The short motif at Pro11–Arg17 is the Nuclear localization signal element. Residues Pro27 to Gln124 form the BRCT domain. The interval Ser151–Ala509 is mediates interaction with DNTTIP2. Residues Val258 to Thr262 are involved in DNA binding. Residues Gly333–Lys338 and His342–Asp345 contribute to the a 2'-deoxyribonucleoside 5'-triphosphate site. Mg(2+) contacts are provided by Asp343, Asp345, and Asp433. An a 2'-deoxyribonucleoside 5'-triphosphate-binding site is contributed by Gly448–Trp449.

It belongs to the DNA polymerase type-X family. As to quaternary structure, interacts with PRP19 and DNTTIP1. Forms a ternary complex with DNTTIP2 and core histone. Released from this complex by PCNA. Interacts with TRERF1. Mg(2+) is required as a cofactor.

It localises to the nucleus. The catalysed reaction is DNA(n) + a 2'-deoxyribonucleoside 5'-triphosphate = DNA(n+1) + diphosphate. In terms of biological role, template-independent DNA polymerase which catalyzes the random addition of deoxynucleoside 5'-triphosphate to the 3'-end of a DNA initiator. One of the in vivo functions of this enzyme is the addition of nucleotides at the junction (N region) of rearranged Ig heavy chain and T-cell receptor gene segments during the maturation of B- and T-cells. The protein is DNA nucleotidylexotransferase (DNTT) of Bos taurus (Bovine).